We begin with the raw amino-acid sequence, 250 residues long: Corrinoid adenosyltransferase MMAB (250 aa).

A mitochondrion-targeting transit peptide spans 1–32 (MAVCGLGSRLGLGSRLGLRGCFGAARLLYPRF). The interval 34–59 (SRGPQGVEDGDRPQPSSKTPRIPKIY) is disordered. ATP-binding positions include 60–63 (TKTG), 68–69 (SS), and lysine 78. Phosphoserine is present on serine 134. 190–194 (RRAER) provides a ligand contact to ATP. Lysine 211 bears the N6-succinyllysine mark. ATP is bound at residue asparagine 214. N6-acetyllysine; alternate is present on lysine 230. Residue lysine 230 is modified to N6-succinyllysine; alternate.

Belongs to the Cob(I)alamin adenosyltransferase family. In terms of assembly, homotrimer. In terms of tissue distribution, expressed in liver and skeletal muscle.

The protein resides in the mitochondrion. The catalysed reaction is cob(I)alamin-[corrinoid adenosyltransferase] + ATP = apo-[corrinoid adenosyltransferase] + adenosylcob(III)alamin + triphosphate. Functionally, converts cob(I)alamin to adenosylcobalamin (adenosylcob(III)alamin), a coenzyme for methylmalonyl-CoA mutase, therefore participates in the final step of the vitamin B12 conversion. Generates adenosylcobalamin (AdoCbl) and directly delivers the cofactor to MUT in a transfer that is stimulated by ATP-binding to MMAB and gated by MMAA. This is Corrinoid adenosyltransferase MMAB from Homo sapiens (Human).